The chain runs to 318 residues: Transaldolase (318 aa).

Lys132 acts as the Schiff-base intermediate with substrate in catalysis.

Belongs to the transaldolase family. Type 1 subfamily. In terms of assembly, homodimer.

The protein localises to the cytoplasm. The enzyme catalyses D-sedoheptulose 7-phosphate + D-glyceraldehyde 3-phosphate = D-erythrose 4-phosphate + beta-D-fructose 6-phosphate. Its pathway is carbohydrate degradation; pentose phosphate pathway; D-glyceraldehyde 3-phosphate and beta-D-fructose 6-phosphate from D-ribose 5-phosphate and D-xylulose 5-phosphate (non-oxidative stage): step 2/3. Functionally, transaldolase is important for the balance of metabolites in the pentose-phosphate pathway. The protein is Transaldolase of Hamiltonella defensa subsp. Acyrthosiphon pisum (strain 5AT).